We begin with the raw amino-acid sequence, 93 residues long: Putative ribosomal protein eL43-like (93 aa).

Residues C40–C61 form a C4-type zinc finger.

It belongs to the eukaryotic ribosomal protein eL43 family.

This Homo sapiens (Human) protein is Putative ribosomal protein eL43-like (RPL37AP8).